The primary structure comprises 67 residues: Large ribosomal subunit protein uL29 (67 aa).

The protein belongs to the universal ribosomal protein uL29 family.

The chain is Large ribosomal subunit protein uL29 from Methanosarcina mazei (strain ATCC BAA-159 / DSM 3647 / Goe1 / Go1 / JCM 11833 / OCM 88) (Methanosarcina frisia).